The chain runs to 205 residues: Large ribosomal subunit protein uL18 (205 aa).

The protein belongs to the universal ribosomal protein uL18 family. As to quaternary structure, part of the 50S ribosomal subunit. Contacts the 5S and 23S rRNAs.

Functionally, this is one of the proteins that bind and probably mediate the attachment of the 5S RNA into the large ribosomal subunit, where it forms part of the central protuberance. The chain is Large ribosomal subunit protein uL18 from Pyrobaculum neutrophilum (strain DSM 2338 / JCM 9278 / NBRC 100436 / V24Sta) (Thermoproteus neutrophilus).